We begin with the raw amino-acid sequence, 712 residues long: Polyribonucleotide nucleotidyltransferase (712 aa).

The Mg(2+) site is built by aspartate 484 and aspartate 490. The 60-residue stretch at 550–609 (PKYKTMDVNPEKIRVLIGPGGKNIKAIIEETGSDVEIQDSGVVNIFAPDTPTLDKTIKLI) folds into the KH domain. The S1 motif domain occupies 619-686 (GEVYDGIVKD…KGGKYSLSRK (68 aa)).

It belongs to the polyribonucleotide nucleotidyltransferase family. It depends on Mg(2+) as a cofactor.

The protein localises to the cytoplasm. The catalysed reaction is RNA(n+1) + phosphate = RNA(n) + a ribonucleoside 5'-diphosphate. In terms of biological role, involved in mRNA degradation. Catalyzes the phosphorolysis of single-stranded polyribonucleotides processively in the 3'- to 5'-direction. The protein is Polyribonucleotide nucleotidyltransferase of Brachyspira hyodysenteriae (strain ATCC 49526 / WA1).